The following is a 181-amino-acid chain: Bifunctional protein PyrR (181 aa).

Substrate contacts are provided by residues 39–40, 104–112, arginine 137, and valine 161; these read RR and DDVLYTGRT. The PRPP-binding signature appears at 100 to 112; it reads VILVDDVLYTGRT.

Belongs to the purine/pyrimidine phosphoribosyltransferase family. PyrR subfamily.

It carries out the reaction UMP + diphosphate = 5-phospho-alpha-D-ribose 1-diphosphate + uracil. Functionally, regulates the transcription of the pyrimidine nucleotide (pyr) operon in response to exogenous pyrimidines. Its function is as follows. Also displays a weak uracil phosphoribosyltransferase activity which is not physiologically significant. This Pasteurella multocida (strain Pm70) protein is Bifunctional protein PyrR.